Consider the following 134-residue polypeptide: Mite allergen Blo t 5 (134 aa).

Positions 1–17 (MKFAIVLIACFAASVLA) are cleaved as a signal peptide. Residues 18-113 (QEHKPKKDDF…RFNYEEAQTL (96 aa)) are a coiled coil.

This sequence belongs to the mite group 5 allergen family. May exist as homodimer and homotrimer. In terms of tissue distribution, midgut and hindgut contents as well as fecal pellets (at protein level).

This is Mite allergen Blo t 5 (BLOT5) from Blomia tropicalis (Mite).